We begin with the raw amino-acid sequence, 222 residues long: DNA-directed RNA polymerase V subunit 5A (222 aa).

It belongs to the archaeal Rpo5/eukaryotic RPB5 RNA polymerase subunit family. As to quaternary structure, component of the RNA polymerase V complex. As to expression, expressed in roots, leaves, siliques and seeds, and to a lower level, in flower buds and flowers.

It is found in the nucleus. Functionally, DNA-dependent RNA polymerase catalyzes the transcription of DNA into RNA using the four ribonucleoside triphosphates as substrates. Component of RNA polymerase V involved in RNA-directed DNA methylation-dependent (RdDM) silencing of endogenous repeated sequences, including transposable elements. Required for establishment of DNA methylation. The chain is DNA-directed RNA polymerase V subunit 5A (NRPE5A) from Arabidopsis thaliana (Mouse-ear cress).